The primary structure comprises 263 residues: 3-methyl-2-oxobutanoate hydroxymethyltransferase (263 aa).

D45 and D84 together coordinate Mg(2+). 3-methyl-2-oxobutanoate contacts are provided by residues 45-46 (DS), D84, and K112. E114 is a Mg(2+) binding site. E180 functions as the Proton acceptor in the catalytic mechanism.

This sequence belongs to the PanB family. Homodecamer; pentamer of dimers. Mg(2+) serves as cofactor.

The protein resides in the cytoplasm. It carries out the reaction 3-methyl-2-oxobutanoate + (6R)-5,10-methylene-5,6,7,8-tetrahydrofolate + H2O = 2-dehydropantoate + (6S)-5,6,7,8-tetrahydrofolate. It participates in cofactor biosynthesis; (R)-pantothenate biosynthesis; (R)-pantoate from 3-methyl-2-oxobutanoate: step 1/2. In terms of biological role, catalyzes the reversible reaction in which hydroxymethyl group from 5,10-methylenetetrahydrofolate is transferred onto alpha-ketoisovalerate to form ketopantoate. The sequence is that of 3-methyl-2-oxobutanoate hydroxymethyltransferase from Citrobacter koseri (strain ATCC BAA-895 / CDC 4225-83 / SGSC4696).